The chain runs to 137 residues: Large ribosomal subunit protein uL16 (137 aa).

Positions M1–V20 are disordered. The span at R7–N17 shows a compositional bias: basic residues.

This sequence belongs to the universal ribosomal protein uL16 family. In terms of assembly, part of the 50S ribosomal subunit.

Its function is as follows. Binds 23S rRNA and is also seen to make contacts with the A and possibly P site tRNAs. The sequence is that of Large ribosomal subunit protein uL16 from Coxiella burnetii (strain CbuG_Q212) (Coxiella burnetii (strain Q212)).